We begin with the raw amino-acid sequence, 407 residues long: Tyrosine--tRNA ligase (407 aa).

The short motif at 47-56 (PTAPDLHLGA) is the 'HIGH' region element. The 'KMSKS' region motif lies at 231–235 (KMSKS). K234 lines the ATP pocket. The region spanning 342 to 403 (PRLSQLLVQV…GKRHFARVAL (62 aa)) is the S4 RNA-binding domain.

The protein belongs to the class-I aminoacyl-tRNA synthetase family. TyrS type 2 subfamily. Homodimer.

It localises to the cytoplasm. It carries out the reaction tRNA(Tyr) + L-tyrosine + ATP = L-tyrosyl-tRNA(Tyr) + AMP + diphosphate + H(+). Catalyzes the attachment of tyrosine to tRNA(Tyr) in a two-step reaction: tyrosine is first activated by ATP to form Tyr-AMP and then transferred to the acceptor end of tRNA(Tyr). The chain is Tyrosine--tRNA ligase from Acidithiobacillus ferrooxidans (Thiobacillus ferrooxidans).